Consider the following 194-residue polypeptide: Ras-like protein RAS1 (194 aa).

A GTP-binding site is contributed by 16 to 23; sequence GAGGVGKS. Residues 38–46 carry the Effector region motif; that stretch reads YDPTIEDSY. Residues 63–67 and 122–125 each bind GTP; these read DTAGQ and NKVD. Cysteine methyl ester is present on cysteine 191. Cysteine 191 carries the S-geranylgeranyl cysteine lipid modification. Residues 192-194 constitute a propeptide, removed in mature form; that stretch reads TLL.

This sequence belongs to the small GTPase superfamily. Ras family.

The protein localises to the cell membrane. The enzyme catalyses GTP + H2O = GDP + phosphate + H(+). Its activity is regulated as follows. Alternates between an inactive form bound to GDP and an active form bound to GTP. Activated by a guanine nucleotide-exchange factor (GEF) and inactivated by a GTPase-activating protein (GAP). Its function is as follows. Ras proteins bind GDP/GTP and possess intrinsic GTPase activity. This is Ras-like protein RAS1 (RAS1) from Hydra vulgaris (Hydra).